Reading from the N-terminus, the 272-residue chain is GPN-loop GTPase 3 (272 aa).

12–17 (GAGKST) is a binding site for GTP. The Gly-Pro-Asn (GPN)-loop; involved in dimer interface motif lies at 69-71 (GPN). 172–175 (SKMD) serves as a coordination point for GTP. The segment at 253 to 272 (QYGEDEEPKVPKDMDDGDFD) is disordered.

The protein belongs to the GPN-loop GTPase family. In terms of assembly, heterodimers with GPN1 or GPN2. Binds to RNA polymerase II (RNAPII).

Functionally, small GTPase required for proper nuclear import of RNA polymerase II and III (RNAPII and RNAPIII). May act at an RNAP assembly step prior to nuclear import. This chain is GPN-loop GTPase 3, found in Cryptococcus neoformans var. neoformans serotype D (strain JEC21 / ATCC MYA-565) (Filobasidiella neoformans).